Reading from the N-terminus, the 179-residue chain is Shikimate kinase (179 aa).

Residue 11–16 (GAGKTT) participates in ATP binding. Residue Thr-15 participates in Mg(2+) binding. Substrate-binding residues include Asp-33, Arg-57, and Gly-79. Arg-118 serves as a coordination point for ATP. Arg-140 serves as a coordination point for substrate.

The protein belongs to the shikimate kinase family. As to quaternary structure, monomer. Mg(2+) serves as cofactor.

The protein resides in the cytoplasm. The catalysed reaction is shikimate + ATP = 3-phosphoshikimate + ADP + H(+). It participates in metabolic intermediate biosynthesis; chorismate biosynthesis; chorismate from D-erythrose 4-phosphate and phosphoenolpyruvate: step 5/7. Its function is as follows. Catalyzes the specific phosphorylation of the 3-hydroxyl group of shikimic acid using ATP as a cosubstrate. This is Shikimate kinase from Bacteroides fragilis (strain ATCC 25285 / DSM 2151 / CCUG 4856 / JCM 11019 / LMG 10263 / NCTC 9343 / Onslow / VPI 2553 / EN-2).